The primary structure comprises 185 residues: Ribosome-recycling factor (185 aa).

This sequence belongs to the RRF family.

The protein localises to the cytoplasm. Its function is as follows. Responsible for the release of ribosomes from messenger RNA at the termination of protein biosynthesis. May increase the efficiency of translation by recycling ribosomes from one round of translation to another. The polypeptide is Ribosome-recycling factor (Shewanella sp. (strain ANA-3)).